The sequence spans 786 residues: MLERTLRVLEYNKVKEQLLEHTASSLGRDKVKHLVPSTDFEEIVEMQDTTDEAAKVIRLKGSAPLGGITDIRSNVKRAKIGSMLSPNELLDIANTMYGSRNMKRFIEDMVDNGVDLPILETHVAQIVSLYDLEKKITNCIGDGGEVVDSASDKLRGIRTQIRTAESRIREKLENMTRSSNAQKMLSDSIVTIRNERYVIPVKQEYRGVYGGIVHDQSASGQTLFIEPQVIVELNNALQEARVKEKQEIERILLMLTEEVAVEADIVLSNVEVVANLDFIFAKAFYAKRIKATKPIVNNERYMDLRQARHPLIDPEVIVPNNIMLGKDFTTIVITGPNTGGKTVTLKTVGICVLMAQSGLHIPVMDESEICVFKNIFADIGDEQSIEQSLSTFSSHMVNIVDILEKADFESLVLFDELGAGTDPQEGAALAISILDEVCNRGARVVATTHYPELKAYGYNREQVINASVEFDVNTLSPTYKLLIGVPGRSNAFEISKRLGLSDRVIEQARNHISTDTNKIENMIAKLEESQKNAERDWNEAEALRKQSEKLHRELQRQIIEFNEERDERLLKAQKEGEEKVEAAKKEAEGIIQELRQLRKAQLANVKDHELIEAKSRLEGAAPELVKKQKVNVKNTAPKQQLRAGDEVKVLTFGQKGQLLEKVSDTEWSVQIGILKMKVKESDMEYINTPKQTEKKAVATVKGRDYHVSLELDLRGERFENAMARVEKYLDDAQLASYPRVSIIHGKGTGALRQGVQDYLKKHRGVKTFRYGDMGEGGLGVTVVELK.

335-342 (GPNTGGKT) provides a ligand contact to ATP. Positions 711–786 (LDLRGERFEN…GLGVTVVELK (76 aa)) constitute a Smr domain.

Belongs to the DNA mismatch repair MutS family. MutS2 subfamily. In terms of assembly, homodimer. Binds to stalled ribosomes, contacting rRNA.

Functionally, endonuclease that is involved in the suppression of homologous recombination and thus may have a key role in the control of bacterial genetic diversity. Acts as a ribosome collision sensor, splitting the ribosome into its 2 subunits. Detects stalled/collided 70S ribosomes which it binds and splits by an ATP-hydrolysis driven conformational change. Acts upstream of the ribosome quality control system (RQC), a ribosome-associated complex that mediates the extraction of incompletely synthesized nascent chains from stalled ribosomes and their subsequent degradation. Probably generates substrates for RQC. This Bacillus cereus (strain ATCC 10987 / NRS 248) protein is Endonuclease MutS2.